The primary structure comprises 198 residues: Small ribosomal subunit protein uS4 (198 aa).

The S4 RNA-binding domain occupies Leu88–Val153.

Belongs to the universal ribosomal protein uS4 family. Part of the 30S ribosomal subunit. Contacts protein S5. The interaction surface between S4 and S5 is involved in control of translational fidelity.

One of the primary rRNA binding proteins, it binds directly to 16S rRNA where it nucleates assembly of the body of the 30S subunit. Its function is as follows. With S5 and S12 plays an important role in translational accuracy. In Lachnoclostridium phytofermentans (strain ATCC 700394 / DSM 18823 / ISDg) (Clostridium phytofermentans), this protein is Small ribosomal subunit protein uS4.